A 485-amino-acid polypeptide reads, in one-letter code: Terminase, large subunit (485 aa).

ADP-binding positions include 17-22, 40-45, and Arg-79; these read KPHHVQ and QSGKSE. Residues 22 to 197 are ATPase activity; it reads QLAIHRSTAK…EFFLMGWRGG (176 aa). Gln-97 and Gln-99 together coordinate ATP. The Walker A motif motif lies at 125–131; it reads SEFRGKS. A Walker B motif motif is present at residues 145-150; that stretch reads FVILDE. Residue Glu-150 is the For ATPase activity of the active site. Residues 256 to 438 are nuclease; sequence SNSVFSGLDM…DIVMSLALAY (183 aa). Residues Asp-294, Asp-347, and Asp-429 each contribute to the Mg(2+) site.

Belongs to the Tequatrovirus large terminase family. Interacts with the terminase small subunit; the active complex is composed of a pentamer of terminase large subunits and a dodecamer of terminase small subunits. Interacts with the portal protein. It depends on Mg(2+) as a cofactor.

In terms of biological role, the terminase large subunit acts as an ATP driven molecular motor necessary for viral DNA translocation into empty capsids and as an endonuclease that cuts the viral genome to initiate and to end a packaging reaction The terminase lies at a unique vertex of the procapsid and is composed of two subunits, a small terminase subunit involved in viral DNA recognition (packaging sequence), and a large terminase subunit possessing endonucleolytic and ATPase activities. Both terminase subunits heterooligomerize and are docked on the portal protein to form the packaging machine. The terminase large subunit exhibits endonuclease activity and cleaves the viral genome concatemer. Once the capsid is packaged with the DNA, the terminase complex is substituted by the tail. The polypeptide is Terminase, large subunit (Thermus thermophilus (Thermus thermophilus phage P23-45)).